The sequence spans 354 residues: NADH-quinone oxidoreductase subunit H (354 aa).

The next 8 membrane-spanning stretches (helical) occupy residues 25–45 (LVRI…LILW), 91–111 (WVYL…WAVI), 126–146 (LLYA…AGWA), 170–190 (MGFA…SDIV), 205–225 (FLSW…VSGI), 257–277 (LFFL…SILF), 290–310 (FIPG…VFIW), and 330–350 (VFLP…MSPL).

The protein belongs to the complex I subunit 1 family. As to quaternary structure, NDH-1 is composed of 14 different subunits. Subunits NuoA, H, J, K, L, M, N constitute the membrane sector of the complex.

It localises to the cell inner membrane. The enzyme catalyses a quinone + NADH + 5 H(+)(in) = a quinol + NAD(+) + 4 H(+)(out). NDH-1 shuttles electrons from NADH, via FMN and iron-sulfur (Fe-S) centers, to quinones in the respiratory chain. The immediate electron acceptor for the enzyme in this species is believed to be ubiquinone. Couples the redox reaction to proton translocation (for every two electrons transferred, four hydrogen ions are translocated across the cytoplasmic membrane), and thus conserves the redox energy in a proton gradient. This subunit may bind ubiquinone. In Paraburkholderia phymatum (strain DSM 17167 / CIP 108236 / LMG 21445 / STM815) (Burkholderia phymatum), this protein is NADH-quinone oxidoreductase subunit H.